A 361-amino-acid chain; its full sequence is Peptide chain release factor 1 (361 aa).

An N5-methylglutamine modification is found at glutamine 238.

The protein belongs to the prokaryotic/mitochondrial release factor family. Post-translationally, methylated by PrmC. Methylation increases the termination efficiency of RF1.

It localises to the cytoplasm. In terms of biological role, peptide chain release factor 1 directs the termination of translation in response to the peptide chain termination codons UAG and UAA. The polypeptide is Peptide chain release factor 1 (Mesomycoplasma hyopneumoniae (strain 232) (Mycoplasma hyopneumoniae)).